Reading from the N-terminus, the 94-residue chain is Gibberellin-regulated protein 11 (94 aa).

The signal sequence occupies residues M1–A23.

This sequence belongs to the GASA family. In terms of processing, six disulfide bonds may be present.

The protein resides in the secreted. Its function is as follows. Gibberellin-regulated protein that may function in hormonal controlled steps of development such as seed germination, flowering and seed maturation. The protein is Gibberellin-regulated protein 11 (GASA11) of Arabidopsis thaliana (Mouse-ear cress).